We begin with the raw amino-acid sequence, 510 residues long: Protein disulfide-isomerase (510 aa).

The N-terminal stretch at 1-20 (MLRRALLCLALTALFRAGAG) is a signal peptide. Residues 27–136 (HVLVLHKGNF…IVNWLKKRTG (110 aa)) form the Thioredoxin 1 domain. Residues Cys-55 and Cys-58 each act as nucleophile in the active site. A disulfide bridge connects residues Cys-55 and Cys-58. The residue at position 202 (Lys-202) is an N6-acetyllysine. N6-succinyllysine is present on residues Lys-224 and Lys-273. Phosphoserine occurs at positions 333 and 359. A Thioredoxin 2 domain is found at 351-477 (GKIKPHLMSQ…FKKFLESGGQ (127 aa)). Active-site nucleophile residues include Cys-399 and Cys-402. Cys-399 and Cys-402 are oxidised to a cystine. A Phosphoserine modification is found at Ser-429. Residues 473-510 (ESGGQDGAGDDDDLEDLEEAEEPDLEEDDDQKAVKDEL) form a disordered region. Residues 480 to 502 (AGDDDDLEDLEEAEEPDLEEDDD) are compositionally biased toward acidic residues. A Prevents secretion from ER motif is present at residues 507–510 (KDEL).

This sequence belongs to the protein disulfide isomerase family. As to quaternary structure, heterodimer; heterodimerizes with the protein microsomal triglyceride transfer MTTP. Homodimer. Monomers and homotetramers may also occur. Interacts with P4HA2, forming a heterotetramer consisting of 2 alpha subunits (P4HA2) and 2 beta (P4HB), where P4HB plays the role of a structural subunit; this tetramer catalyzes the formation of 4-hydroxyproline in collagen. Also constitutes the structural subunit of the microsomal triacylglycerol transfer protein MTTP in mammalian cells. Stabilizes both enzymes and retain them in the ER without contributing to the catalytic activity. Binds UBQLN1. Interacts with ERO1B. Interacts with ILDR2. Interacts with ERN1/IRE1A (via N-terminus); the interaction is enhanced by phosphorylation of P4HB by FAM20C in response to endoplasmic reticulum stress and results in attenuation of ERN1 activity. Phosphorylation of Ser-359 by FAM20C is induced by endoplasmic reticulum stress and results in a functional switch from oxidoreductase to molecular chaperone. It also promotes interaction with ERN1.

It localises to the endoplasmic reticulum. The protein localises to the endoplasmic reticulum lumen. Its subcellular location is the melanosome. It is found in the cell membrane. The enzyme catalyses Catalyzes the rearrangement of -S-S- bonds in proteins.. In terms of biological role, this multifunctional protein catalyzes the formation, breakage and rearrangement of disulfide bonds. At the cell surface, seems to act as a reductase that cleaves disulfide bonds of proteins attached to the cell. May therefore cause structural modifications of exofacial proteins. Inside the cell, seems to form/rearrange disulfide bonds of nascent proteins. At high concentrations and following phosphorylation by FAM20C, functions as a chaperone that inhibits aggregation of misfolded proteins. At low concentrations, facilitates aggregation (anti-chaperone activity). May be involved with other chaperones in the structural modification of the TG precursor in hormone biogenesis. Also acts as a structural subunit of various enzymes such as prolyl 4-hydroxylase and microsomal triacylglycerol transfer protein MTTP. Receptor for LGALS9; the interaction retains P4HB at the cell surface of Th2 T helper cells, increasing disulfide reductase activity at the plasma membrane, altering the plasma membrane redox state and enhancing cell migration. This is Protein disulfide-isomerase (P4HB) from Bos taurus (Bovine).